The following is a 94-amino-acid chain: Ammonia regulation of amino acid uptake protein (94 aa).

2 repeats span residues 48–57 and 58–67; these read HHQIRRRTHQ.

In terms of biological role, involved in ammonia regulation of the GAP1 permease. The protein is Ammonia regulation of amino acid uptake protein (AUA1) of Saccharomyces cerevisiae (strain ATCC 204508 / S288c) (Baker's yeast).